Consider the following 217-residue polypeptide: 3,4-dihydroxy-2-butanone 4-phosphate synthase (217 aa).

Residues 37 to 38 (RE), D42, 150 to 154 (RGGHT), and E174 contribute to the D-ribulose 5-phosphate site. Residue E38 coordinates Mg(2+). Residue H153 coordinates Mg(2+).

This sequence belongs to the DHBP synthase family. Homodimer. Mg(2+) is required as a cofactor. The cofactor is Mn(2+).

It catalyses the reaction D-ribulose 5-phosphate = (2S)-2-hydroxy-3-oxobutyl phosphate + formate + H(+). It functions in the pathway cofactor biosynthesis; riboflavin biosynthesis; 2-hydroxy-3-oxobutyl phosphate from D-ribulose 5-phosphate: step 1/1. In terms of biological role, catalyzes the conversion of D-ribulose 5-phosphate to formate and 3,4-dihydroxy-2-butanone 4-phosphate. The sequence is that of 3,4-dihydroxy-2-butanone 4-phosphate synthase from Escherichia fergusonii (strain ATCC 35469 / DSM 13698 / CCUG 18766 / IAM 14443 / JCM 21226 / LMG 7866 / NBRC 102419 / NCTC 12128 / CDC 0568-73).